Consider the following 191-residue polypeptide: Abscisic acid receptor PYR1 (191 aa).

Residues 23 to 176 (YQLDPGSCSS…NLQKLATVAE (154 aa)) form an START-like region. Lys59 is a binding site for abscisate. Residue Thr78 is modified to Phosphothreonine; by CARK1. Positions 85–89 (SGLPA) match the Gate loop motif. Abscisate contacts are provided by residues 89 to 94 (ANTSTE), 116 to 122 (RLTNYKS), and Glu141. Positions 115-117 (HRL) match the Latch loop motif.

Belongs to the PYR/PYL/RCAR abscisic acid intracellular receptor family. In terms of assembly, homodimer. Binds ABA on one subunit only. Interacts with HAB1, AHG3, ABI1 and ABI2 when complexed to ABA, and possibly with other PP2Cs. Binds to CARs protein in an ABA-independent manner, both at the plasma membrane and in the nucleus. Interacts directly with CAR1 and CAR4. Interacts with CARK1 in the cytosol. Interacts with AIP1 in an abscisic acid-dependent manner. Interacts with FREE1 (via N-terminus). Interacts with the E3 ubiquitin-protein ligase RSL1 at the plasma membrane. Post-translationally, ubiquitynated and degraded by the proteasome upon binding to the E3 ubiquitin-protein ligase RSL1 at the plasma membrane. Phosphorylated by CARK1 especially in response to abscisic acid (ABA); this phosphorylation promotes its stability and inhibitory ability to ABI1.

The protein localises to the cytoplasm. The protein resides in the cytosol. It localises to the nucleus. It is found in the cell membrane. Its subcellular location is the vacuole. Receptor for abscisic acid (ABA) required for ABA-mediated responses such as stomatal closure and germination inhibition. Inhibits the activity of group-A protein phosphatases type 2C (PP2Cs) when activated by ABA. Can be activated by both (-)-ABA and (+)-ABA. Promotes drought tolerance. The polypeptide is Abscisic acid receptor PYR1 (Arabidopsis thaliana (Mouse-ear cress)).